A 514-amino-acid polypeptide reads, in one-letter code: GTPase-activating protein gyp1 (514 aa).

Disordered regions lie at residues 17–65 (LWNG…QPPK) and 130–164 (LPRM…LHSS). Polar residues-rich tracts occupy residues 18–28 (WNGSSSATSDP) and 135–158 (RSTT…TTSR). Residues 216-443 (GIPSEHRPIV…RMWDTYMAEG (228 aa)) enclose the Rab-GAP TBC domain.

It localises to the golgi apparatus. It is found in the golgi stack. The protein localises to the cytoplasm. Its subcellular location is the nucleus. In terms of biological role, stimulates specifically the GTPase activity of ypt1. Functions on the Golgi as a negative regulator of ypt1. In Schizosaccharomyces pombe (strain 972 / ATCC 24843) (Fission yeast), this protein is GTPase-activating protein gyp1.